We begin with the raw amino-acid sequence, 764 residues long: Protein translocase subunit SecA 2 (764 aa).

Residues Gln83, 101-105, and Asp490 contribute to the ATP site; that span reads GEGKT.

This sequence belongs to the SecA family. In terms of assembly, monomer and homodimer. Part of the essential Sec protein translocation apparatus which comprises SecA, SecYEG and auxiliary proteins SecDF. Other proteins may also be involved.

It is found in the cell membrane. The protein resides in the cytoplasm. The catalysed reaction is ATP + H2O + cellular proteinSide 1 = ADP + phosphate + cellular proteinSide 2.. Part of the Sec protein translocase complex. Interacts with the SecYEG preprotein conducting channel. Has a central role in coupling the hydrolysis of ATP to the transfer of proteins into and across the cell membrane, serving as an ATP-driven molecular motor driving the stepwise translocation of polypeptide chains across the membrane. The protein is Protein translocase subunit SecA 2 of Corynebacterium diphtheriae (strain ATCC 700971 / NCTC 13129 / Biotype gravis).